The chain runs to 259 residues: Ribosomal RNA large subunit methyltransferase E (259 aa).

S-adenosyl-L-methionine contacts are provided by Gly-49, Trp-51, Asp-69, Asp-88, and Asp-112. Lys-152 functions as the Proton acceptor in the catalytic mechanism. The region spanning 199 to 257 (PIAEGDEHTVEIVDTGDEGDGIARIEGYTLFVDDAAEGDTVDVTVTDLKPNYGFAERRD) is the TRAM domain.

This sequence belongs to the class I-like SAM-binding methyltransferase superfamily. RNA methyltransferase RlmE family.

It localises to the cytoplasm. The catalysed reaction is uridine(2552) in 23S rRNA + S-adenosyl-L-methionine = 2'-O-methyluridine(2552) in 23S rRNA + S-adenosyl-L-homocysteine + H(+). Its function is as follows. Specifically methylates the uridine in position 2552 of 23S rRNA at the 2'-O position of the ribose in the fully assembled 50S ribosomal subunit. This chain is Ribosomal RNA large subunit methyltransferase E, found in Halobacterium salinarum (strain ATCC 29341 / DSM 671 / R1).